Consider the following 271-residue polypeptide: MTDLNIPHTHAHLVDAFQALGIRAGQALMLHASVKAVGAVMGGPNVILQALMDALTPDGTLMMYAGWQDIPDFIDSLPDALKAVYLEQHPPFDPATARAVRENSVLAEFLRTWPCVHRSANPEASMVAVGRQAALLTANHALDYGYGVESPLAKLVAIEGYVLMLGAPLDTITLLHHAEYLAKMRHKNVVRYPCPILRDGRKVWVTVEDYDTGDPHDDYSFEQIARDYVAQGGGTRGKVGDADAYLFAAQDLTRFAVQWLESRFGDSASYG.

Histidine 31, alanine 32, serine 33, valine 34, and lysine 35 together coordinate CoA. 3 residues coordinate a 2-deoxystreptamine antibiotic: tyrosine 64, aspartate 72, and glutamate 102. CoA is bound by residues serine 104, valine 105, and phenylalanine 109. Residues glutamate 123, tyrosine 146, and aspartate 170 each contribute to the a 2-deoxystreptamine antibiotic site. The CoA site is built by threonine 171 and threonine 173. A 2-deoxystreptamine antibiotic contacts are provided by histidine 176, threonine 212, glycine 213, and phenylalanine 221.

This sequence belongs to the antibiotic N-acetyltransferase family. Homodimer.

The enzyme catalyses a 2-deoxystreptamine antibiotic + acetyl-CoA = an N(3)-acetyl-2-deoxystreptamine antibiotic + CoA + H(+). Functionally, resistance to antibiotics containing the 2-deoxy-streptamine ring including dibekacin, gentamicin, kanamycin, sisomicin, tobramycin and neomycin, but not to amikacin or netilmicin. Acetylates a broad range of both 4,5- and 4,6-disubstituted aminoglycosides, including neomycin, paromomycin, ribostamycin, sisomicin, gentamicin, tobramycin and kanamycin, with no preference of one disubstitution over the other. Acetylates sisomicin and kanamycin most and least efficiently, respectively. Does not modify plazomicin. The chain is Aminoglycoside N(3)-acetyltransferase III from Pseudomonas aeruginosa.